The primary structure comprises 111 residues: Photosystem II reaction center Psb28 protein (111 aa).

It belongs to the Psb28 family. As to quaternary structure, part of the photosystem II complex.

It localises to the cellular thylakoid membrane. The sequence is that of Photosystem II reaction center Psb28 protein from Trichormus variabilis (strain ATCC 29413 / PCC 7937) (Anabaena variabilis).